The primary structure comprises 146 residues: ATP synthase epsilon chain (146 aa).

It belongs to the ATPase epsilon chain family. F-type ATPases have 2 components, CF(1) - the catalytic core - and CF(0) - the membrane proton channel. CF(1) has five subunits: alpha(3), beta(3), gamma(1), delta(1), epsilon(1). CF(0) has three main subunits: a, b and c.

The protein resides in the cell membrane. Its function is as follows. Produces ATP from ADP in the presence of a proton gradient across the membrane. The protein is ATP synthase epsilon chain of Lactobacillus delbrueckii subsp. bulgaricus (strain ATCC 11842 / DSM 20081 / BCRC 10696 / JCM 1002 / NBRC 13953 / NCIMB 11778 / NCTC 12712 / WDCM 00102 / Lb 14).